The chain runs to 185 residues: DNA-directed RNA polymerase 22 kDa subunit (185 aa).

This sequence belongs to the poxviridae DNA-directed RNA polymerase 22 kDa subunit family. In terms of assembly, the DNA-dependent RNA polymerase used for intermediate and late genes expression consists of eight subunits Rpo30/OPG66, Rpo7/OPG90, Rpo22/OPG103, Rpo147/OPG105, Rpo18/OPG119, Rpo19/OPG131, Rpo132/OPG151 and Rpo35/OPG156. The same holoenzyme, with the addition of the transcription-specificity factor OPG109, is used for early gene expression.

It is found in the virion. It catalyses the reaction RNA(n) + a ribonucleoside 5'-triphosphate = RNA(n+1) + diphosphate. In terms of biological role, part of the DNA-dependent RNA polymerase which catalyzes the transcription of viral DNA into RNA using the four ribonucleoside triphosphates as substrates. Responsible for the transcription of early, intermediate and late genes. DNA-dependent RNA polymerase associates with the early transcription factor (ETF), itself composed of OPG118 and OPG133, thereby allowing the early genes transcription. Late transcription, and probably also intermediate transcription, require newly synthesized RNA polymerase. This Variola virus (isolate Human/India/Ind3/1967) (VARV) protein is DNA-directed RNA polymerase 22 kDa subunit (OPG103).